Reading from the N-terminus, the 256-residue chain is Thiazole synthase (256 aa).

Lysine 96 acts as the Schiff-base intermediate with DXP in catalysis. 1-deoxy-D-xylulose 5-phosphate-binding positions include glycine 157, alanine 184–glycine 185, and asparagine 206–threonine 207.

Belongs to the ThiG family. Homotetramer. Forms heterodimers with either ThiH or ThiS.

Its subcellular location is the cytoplasm. The catalysed reaction is [ThiS sulfur-carrier protein]-C-terminal-Gly-aminoethanethioate + 2-iminoacetate + 1-deoxy-D-xylulose 5-phosphate = [ThiS sulfur-carrier protein]-C-terminal Gly-Gly + 2-[(2R,5Z)-2-carboxy-4-methylthiazol-5(2H)-ylidene]ethyl phosphate + 2 H2O + H(+). It participates in cofactor biosynthesis; thiamine diphosphate biosynthesis. Functionally, catalyzes the rearrangement of 1-deoxy-D-xylulose 5-phosphate (DXP) to produce the thiazole phosphate moiety of thiamine. Sulfur is provided by the thiocarboxylate moiety of the carrier protein ThiS. In vitro, sulfur can be provided by H(2)S. The protein is Thiazole synthase of Brucella melitensis biotype 2 (strain ATCC 23457).